The following is a 104-amino-acid chain: MEKIRLKLKAYDHRVLDRSVVAIVEAVKRSGSEIRGPIPLPTKNKRYTVLRSPHVNKDSREQFEIRFYSRLIDIISATPETVDSLMKLDLAPEVDVEVTSMETK.

This sequence belongs to the universal ribosomal protein uS10 family. As to quaternary structure, part of the 30S ribosomal subunit.

Functionally, involved in the binding of tRNA to the ribosomes. The protein is Small ribosomal subunit protein uS10 of Helicobacter pylori (strain P12).